A 128-amino-acid chain; its full sequence is MHRKRLRVVLSATLLDLITCVQLMLDPLVRSHVIARLVRWRHHRLLLAELVLSETRVRILRLALEQGALESGAMSSRALARIVIPRSSSRPNWKLSRVVSELSDNSKTNVYKNQLFIHCARYLLHVLP.

The N-terminal stretch at 1–31 (MHRKRLRVVLSATLLDLITCVQLMLDPLVRS) is a signal peptide. The RxLR signature appears at 58-61 (RILR).

This sequence belongs to the RxLR effector family.

It is found in the secreted. The protein localises to the host nucleus. Its subcellular location is the host cytoplasm. In terms of biological role, secreted effector that completely suppresses the host cell death induced by cell death-inducing proteins. The chain is Secreted RxLR effector protein 57 from Plasmopara viticola (Downy mildew of grapevine).